Here is a 406-residue protein sequence, read N- to C-terminus: Argininosuccinate synthase (406 aa).

8–16 (AYSGGLDTS) provides a ligand contact to ATP. Tyr86 is a binding site for L-citrulline. Gly116 is a binding site for ATP. Positions 118, 122, and 123 each coordinate L-aspartate. Asn122 is a binding site for L-citrulline. 5 residues coordinate L-citrulline: Arg126, Ser174, Ser183, Glu259, and Tyr271.

This sequence belongs to the argininosuccinate synthase family. Type 1 subfamily. In terms of assembly, homotetramer.

The protein localises to the cytoplasm. It carries out the reaction L-citrulline + L-aspartate + ATP = 2-(N(omega)-L-arginino)succinate + AMP + diphosphate + H(+). Its pathway is amino-acid biosynthesis; L-arginine biosynthesis; L-arginine from L-ornithine and carbamoyl phosphate: step 2/3. The protein is Argininosuccinate synthase of Oenococcus oeni (strain ATCC BAA-331 / PSU-1).